The sequence spans 237 residues: tRNA (guanine-N(7)-)-methyltransferase (237 aa).

The segment at 1–24 (MTAHKPGDPTTLNRLYGRSKGKPL) is disordered. Residues E62, E87, D119, and D141 each contribute to the S-adenosyl-L-methionine site. D141 is a catalytic residue. Residues K145, D177, and 216-219 (TRYE) each bind substrate.

It belongs to the class I-like SAM-binding methyltransferase superfamily. TrmB family.

It catalyses the reaction guanosine(46) in tRNA + S-adenosyl-L-methionine = N(7)-methylguanosine(46) in tRNA + S-adenosyl-L-homocysteine. The protein operates within tRNA modification; N(7)-methylguanine-tRNA biosynthesis. Its function is as follows. Catalyzes the formation of N(7)-methylguanine at position 46 (m7G46) in tRNA. The polypeptide is tRNA (guanine-N(7)-)-methyltransferase (Sphingopyxis alaskensis (strain DSM 13593 / LMG 18877 / RB2256) (Sphingomonas alaskensis)).